A 1119-amino-acid chain; its full sequence is Nuclear matrix constituent protein 1 (1119 aa).

2 coiled-coil regions span residues 140 to 226 and 328 to 488; these read LAEL…LYQQ and LQNR…LDER. Disordered stretches follow at residues 846–884, 903–974, 989–1015, and 1046–1109; these read LDVE…AEEA, LASA…PTGR, NGAL…EIPD, and GINA…EVSM. Composition is skewed to basic residues over residues 859-876 and 920-929; these read GNRK…RKRS and KRTRNSRKRN. Residues 1075–1085 are compositionally biased toward polar residues; sequence TPEQSRGYQNQ.

Belongs to the CRWN family.

It localises to the nucleus matrix. It is found in the nucleus lamina. In terms of biological role, architectural component of nuclear structure that plays different roles in controlling nuclear size and morphology. The protein is Nuclear matrix constituent protein 1 of Daucus carota subsp. sativus (Carrot).